A 29-amino-acid chain; its full sequence is GKYTCGETCFKGKCYTPGCTCSYPICKKD.

Positions 1–29 form a cross-link, cyclopeptide (Gly-Asp); it reads GKYTCGETCFKGKCYTPGCTCSYPICKKD. Cystine bridges form between Cys5/Cys19, Cys9/Cys21, and Cys14/Cys26.

Post-translationally, this is a cyclic peptide. Contains 3 disulfide bonds.

Its function is as follows. Probably participates in a plant defense mechanism (Potential). Binds to and induces leakage in phospholipd membranes, particularly ones containing 1-palmitoyl-2-oleophosphatidylethanolamine (POPE). In vitro, displays cytotoxicity against cultured cells but no hemolytic activity towards fresh erythrocytes. Not active against Gram-negative bacterium E.coli ATCC 25922 or Gram-positive bacterium S.aureus ATCC 25923 up to a concentration of 64 uM. The polypeptide is Cyclotide mela-1 (Melicytus latifolius (Norfolk Island mahoe)).